Here is a 184-residue protein sequence, read N- to C-terminus: Small ribosomal subunit protein uS4 (184 aa).

One can recognise an S4 RNA-binding domain in the interval 108 to 172 (RRLQTQVHRL…SPMTKESHPE (65 aa)). The segment at 163–184 (SPMTKESHPERPAQIAASVVEE) is disordered.

Belongs to the universal ribosomal protein uS4 family. In terms of assembly, part of the 30S ribosomal subunit. Contacts protein S5. The interaction surface between S4 and S5 is involved in control of translational fidelity.

One of the primary rRNA binding proteins, it binds directly to 16S rRNA where it nucleates assembly of the body of the 30S subunit. Its function is as follows. With S5 and S12 plays an important role in translational accuracy. The sequence is that of Small ribosomal subunit protein uS4 from Methanococcoides burtonii (strain DSM 6242 / NBRC 107633 / OCM 468 / ACE-M).